The primary structure comprises 217 residues: MYLKRILITLSLITLPIVPCLSYAAESISNVGINNTGSTANLAPAAADANVSASDKHEESWWQRSKNNLSTTWNAPQSHDIYIPTITWHNRWTYDKEKTDRYNEKPWGAGYGVSRLDKDGDWHGLYIMAFKDSYNKWEPIGGYGYEKRWRPTSDQDFQLGLGFTAGFTMRDNWNYIPIPVLLPLASISYSKLSFQATYIPGTYNNGNVFFAWFRWQI.

A signal peptide spans 1-24 (MYLKRILITLSLITLPIVPCLSYA). Active-site residues include histidine 89, aspartate 132, and serine 133.

This sequence belongs to the lipid A palmitoyltransferase family. In terms of assembly, homodimer.

The protein resides in the cell outer membrane. The catalysed reaction is a lipid A + a 1,2-diacyl-sn-glycero-3-phosphocholine = a hepta-acyl lipid A + a 2-acyl-sn-glycero-3-phosphocholine. It carries out the reaction a lipid IVA + a 1,2-diacyl-sn-glycero-3-phosphocholine = a lipid IVB + a 2-acyl-sn-glycero-3-phosphocholine. It catalyses the reaction a lipid IIA + a 1,2-diacyl-sn-glycero-3-phosphocholine = a lipid IIB + a 2-acyl-sn-glycero-3-phosphocholine. Functionally, transfers a fatty acid residue from the sn-1 position of a phospholipid to the N-linked hydroxyfatty acid chain on the proximal unit of lipid A or its precursors. This is Lipid A acyltransferase PagP from Pectobacterium atrosepticum (strain SCRI 1043 / ATCC BAA-672) (Erwinia carotovora subsp. atroseptica).